A 305-amino-acid chain; its full sequence is Serine/threonine-protein phosphatase PP-X isozyme 2 (305 aa).

Positions 51, 53, 79, and 111 each coordinate Mn(2+). His-112 (proton donor) is an active-site residue. Mn(2+)-binding residues include His-161 and His-236.

It belongs to the PPP phosphatase family. PP-4 (PP-X) subfamily. It depends on Mn(2+) as a cofactor. In terms of tissue distribution, ubiquitous, mostly expressed in root mersitems, flowers, and vascular tissues.

It is found in the plastid stroma. It catalyses the reaction O-phospho-L-seryl-[protein] + H2O = L-seryl-[protein] + phosphate. It carries out the reaction O-phospho-L-threonyl-[protein] + H2O = L-threonyl-[protein] + phosphate. The protein is Serine/threonine-protein phosphatase PP-X isozyme 2 (PPX2) of Arabidopsis thaliana (Mouse-ear cress).